The following is a 234-amino-acid chain: 1-(5-phosphoribosyl)-5-[(5-phosphoribosylamino)methylideneamino] imidazole-4-carboxamide isomerase (234 aa).

Asp9 functions as the Proton acceptor in the catalytic mechanism. Asp131 functions as the Proton donor in the catalytic mechanism.

This sequence belongs to the HisA/HisF family.

The protein resides in the cytoplasm. It carries out the reaction 1-(5-phospho-beta-D-ribosyl)-5-[(5-phospho-beta-D-ribosylamino)methylideneamino]imidazole-4-carboxamide = 5-[(5-phospho-1-deoxy-D-ribulos-1-ylimino)methylamino]-1-(5-phospho-beta-D-ribosyl)imidazole-4-carboxamide. The protein operates within amino-acid biosynthesis; L-histidine biosynthesis; L-histidine from 5-phospho-alpha-D-ribose 1-diphosphate: step 4/9. This Staphylococcus aureus (strain NCTC 8325 / PS 47) protein is 1-(5-phosphoribosyl)-5-[(5-phosphoribosylamino)methylideneamino] imidazole-4-carboxamide isomerase.